A 337-amino-acid polypeptide reads, in one-letter code: MEKSWMLWNFVERWLIALASWSWALCRISLLPLIVTFHLYGGIILLLLIFISIAGILYKFQDVLLYFPEQPSSSRLYVPMPTGIPHENIFIRTKDGIRLNLILIRYTGDNSPYSPTIIYFHGNAGNIGHRLPNALLMLVNLKVNLLLVDYRGYGKSEGEASEEGLYLDSEAVLDYVMTRPDLDKTKIFLFGRSLGGAVAIHLASENSHRISAIMVENTFLSIPHMASTLFSFFPMRYLPLWCYKNKFLSYRKISQCRMPSLFISGLSDQLIPPVMMKQLYELSPSRTKRLAIFPDGTHNDTWQCQGYFTALEQFIKEVVKSHSPEEMAKTSSNVTII.

Residues 37–57 (FHLYGGIILLLLIFISIAGIL) traverse the membrane as a helical; Signal-anchor for type II membrane protein segment. Residues Ser-193, Asp-268, and His-298 each act as charge relay system in the active site. An N-linked (GlcNAc...) asparagine glycan is attached at Asn-299.

Belongs to the serine esterase family.

Its subcellular location is the membrane. This Homo sapiens (Human) protein is Protein ABHD13.